Reading from the N-terminus, the 155-residue chain is Ribonuclease H (155 aa).

One can recognise an RNase H type-1 domain in the interval 1 to 142 (MTKQVEIFTD…CDELARAAAM (142 aa)). Asp10, Glu48, Asp70, and Asp134 together coordinate Mg(2+).

The protein belongs to the RNase H family. As to quaternary structure, monomer. The cofactor is Mg(2+).

The protein localises to the cytoplasm. The enzyme catalyses Endonucleolytic cleavage to 5'-phosphomonoester.. Endonuclease that specifically degrades the RNA of RNA-DNA hybrids. The protein is Ribonuclease H of Enterobacter sp. (strain 638).